The chain runs to 185 residues: Thymidine kinase (185 aa).

ATP is bound by residues 10–17 (GPMYSGKT) and 83–86 (DEVQ). Catalysis depends on glutamate 84, which acts as the Proton acceptor. Residues cysteine 140, cysteine 143, cysteine 173, and cysteine 176 each coordinate Zn(2+).

Belongs to the thymidine kinase family. In terms of assembly, homotetramer.

It localises to the cytoplasm. It carries out the reaction thymidine + ATP = dTMP + ADP + H(+). In Pseudothermotoga lettingae (strain ATCC BAA-301 / DSM 14385 / NBRC 107922 / TMO) (Thermotoga lettingae), this protein is Thymidine kinase.